The following is a 353-amino-acid chain: Guanine nucleotide-binding protein G(q) subunit alpha (353 aa).

S-palmitoyl cysteine attachment occurs at residues C3 and C4. Residues 32–353 form the G-alpha domain; the sequence is RELKLLLLGT…QLNLKEYNLV (322 aa). Positions 35–48 are G1 motif; that stretch reads KLLLLGTGESGKST. GTP contacts are provided by residues 40–47, 174–180, 199–203, 268–271, and A325; these read GTGESGKS, LRVRAPT, DVGGQ, and NKKD. The Mg(2+) site is built by S47 and T180. The interval 172 to 180 is G2 motif; sequence DILRVRAPT. The G3 motif stretch occupies residues 195–204; sequence FRMVDVGGQR. The G4 motif stretch occupies residues 264–271; it reads ILFLNKKD. The segment at 323 to 328 is G5 motif; the sequence is TCATDT.

It belongs to the G-alpha family. G(q) subfamily. G proteins are composed of 3 units; alpha, beta and gamma. The alpha chain contains the guanine nucleotide binding site.

Its function is as follows. Guanine nucleotide-binding proteins (G proteins) are involved as modulators or transducers in various transmembrane signaling systems. The sequence is that of Guanine nucleotide-binding protein G(q) subunit alpha from Homarus americanus (American lobster).